A 329-amino-acid chain; its full sequence is Serine dehydratase-like (329 aa).

Residue Met1 is modified to N-acetylmethionine. N6-(pyridoxal phosphate)lysine is present on Lys48.

The protein belongs to the serine/threonine dehydratase family. Monomer. Homodimer. Pyridoxal 5'-phosphate is required as a cofactor. As to expression, expressed in lung cancer cell lines.

The catalysed reaction is L-serine = pyruvate + NH4(+). It catalyses the reaction L-threonine = 2-oxobutanoate + NH4(+). It carries out the reaction L-glutamate = D-glutamate. In terms of biological role, catalyzes the pyridoxal-phosphate-dependent dehydrative deamination of L-threonine and L-serine to ammonia and alpha-ketobutyrate and pyruvate, respectively. Also exhibits racemase activity towards L-glutamate and D-glutamate. The chain is Serine dehydratase-like (SDSL) from Homo sapiens (Human).